A 417-amino-acid polypeptide reads, in one-letter code: Solanesyl diphosphate synthase 2, chloroplastic (417 aa).

The transit peptide at 1-60 (MMMSCRNIDLGTSVLDHSCSSSSTSRRFLFGNSSKTVCMIGGRSCVGNLVFLRRDLATCR) directs the protein to the chloroplast. The isopentenyl diphosphate site is built by Lys-137, Arg-140, and His-175. Mg(2+) is bound by residues Asp-182 and Asp-186. An all-trans-polyprenyl diphosphate is bound at residue Arg-191. Residue Arg-192 coordinates isopentenyl diphosphate. An all-trans-polyprenyl diphosphate contacts are provided by Lys-268, Thr-269, Gln-306, and Lys-323.

This sequence belongs to the FPP/GGPP synthase family. Homodimer. Interacts with FBN5. The cofactor is Mg(2+). In terms of tissue distribution, higher expression in leaves than in roots.

Its subcellular location is the plastid. It localises to the chloroplast. It catalyses the reaction 5 isopentenyl diphosphate + (2E,6E,10E)-geranylgeranyl diphosphate = all-trans-nonaprenyl diphosphate + 5 diphosphate. In terms of biological role, involved in providing solanesyl diphosphate for plastoquinone-9 (PQ-9) formation in plastids. Catalyzes the elongation of the prenyl side chain of PQ-9 in plastids. Contributes to the biosynthesis of plastochromanol-8 (PC-8) in plastids. Does not contribute to the synthesis of tocopherol or ubiquinone. PQ-9 and PC-8 are lipophilic antioxidants that act as protectant against photooxidative stress under high light stress conditions. Prefers geranylgeranyl diphosphate to farnesyl diphosphate as substrate. No activity with geranyl diphosphate or dimethylallyl diphosphate as substrate. The sequence is that of Solanesyl diphosphate synthase 2, chloroplastic from Arabidopsis thaliana (Mouse-ear cress).